We begin with the raw amino-acid sequence, 340 residues long: Ketol-acid reductoisomerase (NADP(+)) (340 aa).

A KARI N-terminal Rossmann domain is found at 3–182 (VQMEYEKDVK…GAARVGLLET (180 aa)). NADP(+) contacts are provided by residues 26-29 (YGSQ), Arg-49, Ser-53, and 83-86 (DEIQ). His-108 is a catalytic residue. Residue Gly-134 participates in NADP(+) binding. Residues 183 to 328 (TYKEETEEDL…AELRKAMPFV (146 aa)) form the KARI C-terminal knotted domain. The Mg(2+) site is built by Asp-191, Glu-195, Glu-227, and Glu-231. Position 252 (Ser-252) interacts with substrate.

Belongs to the ketol-acid reductoisomerase family. The cofactor is Mg(2+).

It carries out the reaction (2R)-2,3-dihydroxy-3-methylbutanoate + NADP(+) = (2S)-2-acetolactate + NADPH + H(+). The catalysed reaction is (2R,3R)-2,3-dihydroxy-3-methylpentanoate + NADP(+) = (S)-2-ethyl-2-hydroxy-3-oxobutanoate + NADPH + H(+). It participates in amino-acid biosynthesis; L-isoleucine biosynthesis; L-isoleucine from 2-oxobutanoate: step 2/4. The protein operates within amino-acid biosynthesis; L-valine biosynthesis; L-valine from pyruvate: step 2/4. In terms of biological role, involved in the biosynthesis of branched-chain amino acids (BCAA). Catalyzes an alkyl-migration followed by a ketol-acid reduction of (S)-2-acetolactate (S2AL) to yield (R)-2,3-dihydroxy-isovalerate. In the isomerase reaction, S2AL is rearranged via a Mg-dependent methyl migration to produce 3-hydroxy-3-methyl-2-ketobutyrate (HMKB). In the reductase reaction, this 2-ketoacid undergoes a metal-dependent reduction by NADPH to yield (R)-2,3-dihydroxy-isovalerate. In Streptococcus pneumoniae (strain CGSP14), this protein is Ketol-acid reductoisomerase (NADP(+)).